Reading from the N-terminus, the 251-residue chain is Triosephosphate isomerase (251 aa).

Position 9-11 (9-11) interacts with substrate; sequence NWK. Catalysis depends on His-95, which acts as the Electrophile. The active-site Proton acceptor is Glu-167. Substrate is bound by residues Gly-173, Ser-213, and 234-235; that span reads GG. The residue at position 213 (Ser-213) is a Phosphoserine.

Belongs to the triosephosphate isomerase family. As to quaternary structure, homodimer.

It is found in the cytoplasm. The enzyme catalyses D-glyceraldehyde 3-phosphate = dihydroxyacetone phosphate. It participates in carbohydrate biosynthesis; gluconeogenesis. It functions in the pathway carbohydrate degradation; glycolysis; D-glyceraldehyde 3-phosphate from glycerone phosphate: step 1/1. Functionally, involved in the gluconeogenesis. Catalyzes stereospecifically the conversion of dihydroxyacetone phosphate (DHAP) to D-glyceraldehyde-3-phosphate (G3P). The polypeptide is Triosephosphate isomerase (Bacillus cereus (strain ATCC 10987 / NRS 248)).